The following is a 181-amino-acid chain: Shikimate kinase (181 aa).

23 to 28 (GTGKST) contacts ATP. Ser-27 contributes to the Mg(2+) binding site. Substrate-binding residues include Asp-45, Arg-69, and Gly-91. Residue Arg-129 participates in ATP binding. Arg-148 contributes to the substrate binding site.

It belongs to the shikimate kinase family. Monomer. Mg(2+) is required as a cofactor.

The protein localises to the cytoplasm. The enzyme catalyses shikimate + ATP = 3-phosphoshikimate + ADP + H(+). The protein operates within metabolic intermediate biosynthesis; chorismate biosynthesis; chorismate from D-erythrose 4-phosphate and phosphoenolpyruvate: step 5/7. Catalyzes the specific phosphorylation of the 3-hydroxyl group of shikimic acid using ATP as a cosubstrate. The sequence is that of Shikimate kinase from Geobacter sulfurreducens (strain ATCC 51573 / DSM 12127 / PCA).